The following is a 477-amino-acid chain: Dihydrolipoyl dehydrogenase (477 aa).

FAD is bound by residues 41–50 (EKRGALGGTC), Lys59, Gly124, and 153–155 (TGS). Residues Cys50 and Cys55 are joined by a disulfide bond. NAD(+) is bound by residues 190–197 (GGGVIGLE), Glu213, Val248, and Gly282. FAD is bound by residues Asp323 and 330-333 (MLAH). His456 serves as the catalytic Proton acceptor.

Belongs to the class-I pyridine nucleotide-disulfide oxidoreductase family. In terms of assembly, homodimer. The cofactor is FAD.

It carries out the reaction N(6)-[(R)-dihydrolipoyl]-L-lysyl-[protein] + NAD(+) = N(6)-[(R)-lipoyl]-L-lysyl-[protein] + NADH + H(+). This chain is Dihydrolipoyl dehydrogenase (LPD), found in Trypanosoma cruzi.